Here is a 694-residue protein sequence, read N- to C-terminus: MNFQTISINLTEGKILVFETGKIARQANGAVLVRSGETCVFASACAVDLDDKVDFLPLRVDYQEKFSSTGKTLGGFIKREGRPSEKEILVSRLIDRSLRPSFPYRLMQDVQVLSYVWSYDGQVLPDPLAICAASAALAISDIPQSNIVAGVRIGCIDNQWVINPTKTELASSTLDLVLAGTENAILMIEGHCDFFTEEQVLDAIEFGHKHIVTICKRLQLWQEEVGKSKNLSAVYPLPAEVLTAVKECAQDKFTELFNIKDKKVHAATAHEIEENILEKLQREDDDLFSSFNIKAACKTLKSDTMRALIRDREIRADGRSLTTVRPITIETSYLPRTHGSCLFTRGETQTLAVCTLGSEAMAQRYEDLNGEGLSKFYLQYFFPPFSVGEVGRIGSPGRREIGHGKLAEKALSHALPDSATFPYTIRIESNITESNGSSSMASVCGGCLALMDAGVPISSPIAGIAMGLILDDQGAIILSDISGLEDHLGDMDFKIAGSGKGITAFQMDIKVEGITPAIMKKALSQAKQGCNDILNIMNEALSAPKADLSQYAPRIETMQIKPTKIASVIGPGGKQIRQIIEETGVQIDVNDLGVVSISASSASAINKAKEIIEGLVGEVEVGKTYRGRVTSVVAFGAFVEVLPGKEGLCHISECSRQRIENISDVVKEGDIIDVKLLSINEKGQLKLSHKATLE.

Mg(2+) is bound by residues D486 and D492. Residues 553 to 612 enclose the KH domain; that stretch reads PRIETMQIKPTKIASVIGPGGKQIRQIIEETGVQIDVNDLGVVSISASSASAINKAKEII. Residues 622 to 690 enclose the S1 motif domain; sequence GKTYRGRVTS…EKGQLKLSHK (69 aa).

The protein belongs to the polyribonucleotide nucleotidyltransferase family. It depends on Mg(2+) as a cofactor.

It is found in the cytoplasm. The enzyme catalyses RNA(n+1) + phosphate = RNA(n) + a ribonucleoside 5'-diphosphate. In terms of biological role, involved in mRNA degradation. Catalyzes the phosphorolysis of single-stranded polyribonucleotides processively in the 3'- to 5'-direction. The protein is Polyribonucleotide nucleotidyltransferase of Chlamydia pneumoniae (Chlamydophila pneumoniae).